We begin with the raw amino-acid sequence, 94 residues long: UPF0381 protein YfcZ (94 aa).

It belongs to the UPF0381 family.

The polypeptide is UPF0381 protein YfcZ (yfcZ) (Escherichia coli O6:H1 (strain CFT073 / ATCC 700928 / UPEC)).